The sequence spans 148 residues: MVMVLSPLLLVFILGLGLTPVAPAQDDYRYIHFLTQHYDAKPKGRNDEYCFNMMKNRRLTRPCKDRNTFIHGNKNDIKAICEDRNGQPYRGDLRISKSEFQITICKHKGGSSRPPCRYGATEDSRVIVVGCENGLPVHFDESFITPRH.

Positions 1–23 (MVMVLSPLLLVFILGLGLTPVAP) are cleaved as a signal peptide. H37 (proton acceptor) is an active-site residue. Residue R45 participates in tRNA binding. 3 cysteine pairs are disulfide-bonded: C50/C105, C63/C116, and C81/C131. The short motif at 55-59 (KNRRL) is the Nucleolar localization signal element. The tRNA site is built by C105 and I127. Catalysis depends on H138, which acts as the Proton donor.

It belongs to the pancreatic ribonuclease family. Homodimer. Interacts with RNH1; inhibiting ANG ribonuclease activity. In terms of tissue distribution, serum and milk.

The protein localises to the secreted. It localises to the nucleus. The protein resides in the nucleolus. Its subcellular location is the cytoplasm. It is found in the stress granule. Functionally, secreted ribonuclease that can either promote or restrict cell proliferation of target cells, depending on the context. Endocytosed in target cells via its receptor PLXNB2 and translocates to the cytoplasm or nucleus. Under stress conditions, localizes to the cytoplasm and promotes the assembly of stress granules (SGs): specifically cleaves a subset of tRNAs within anticodon loops to produce tRNA-derived stress-induced fragments (tiRNAs), resulting in translation repression and inhibition of cell proliferation. tiRNas also prevent formation of apoptosome, thereby promoting cell survival. Preferentially cleaves RNAs between a pyrimidine and an adenosine residue, suggesting that it cleaves the anticodon loop of tRNA(Ala) (32-UUAGCAU-38) after positions 33 and 36. Cleaves a subset of tRNAs, including tRNA(Ala), tRNA(Glu), tRNA(Gly), tRNA(Lys), tRNA(Val), tRNA(His), tRNA(Asp) and tRNA(Sec). Under growth conditions and in differentiated cells, translocates to the nucleus and stimulates ribosomal RNA (rRNA) transcription, including that containing the initiation site sequences of 45S rRNA, thereby promoting cell growth and proliferation. Angiogenin induces vascularization of normal and malignant tissues via its ability to promote rRNA transcription. This is Angiogenin-1 (ANG1) from Bos taurus (Bovine).